We begin with the raw amino-acid sequence, 338 residues long: Glyceraldehyde-3-phosphate dehydrogenase 2 (338 aa).

NAD(+) is bound by residues 13 to 14 and Gly111; that span reads TI. Residue 140–142 participates in D-glyceraldehyde 3-phosphate binding; it reads SCN. Cys141 serves as the catalytic Nucleophile. An NAD(+)-binding site is contributed by Arg169. 195 to 196 contributes to the D-glyceraldehyde 3-phosphate binding site; sequence HG. Gln300 serves as a coordination point for NAD(+).

This sequence belongs to the glyceraldehyde-3-phosphate dehydrogenase family. In terms of assembly, homotetramer.

It localises to the cytoplasm. It carries out the reaction D-glyceraldehyde 3-phosphate + phosphate + NADP(+) = (2R)-3-phospho-glyceroyl phosphate + NADPH + H(+). The catalysed reaction is D-glyceraldehyde 3-phosphate + phosphate + NAD(+) = (2R)-3-phospho-glyceroyl phosphate + NADH + H(+). The protein operates within carbohydrate degradation; glycolysis; pyruvate from D-glyceraldehyde 3-phosphate: step 1/5. In Methanosarcina barkeri (strain Fusaro / DSM 804), this protein is Glyceraldehyde-3-phosphate dehydrogenase 2.